Here is a 70-residue protein sequence, read N- to C-terminus: Conotoxin Lt11.2 (70 aa).

Positions 1–26 are cleaved as a signal peptide; the sequence is MMFRLTSVSCFLLFIVFLNLVVLTNA. 4 cysteine pairs are disulfide-bonded: cysteine 27–cysteine 41, cysteine 34–cysteine 46, cysteine 40–cysteine 50, and cysteine 45–cysteine 54. Position 57 is a proline amide (proline 57). The propeptide occupies 61 to 70; the sequence is EKLQEFFRQR.

Belongs to the conotoxin I2 superfamily. As to expression, expressed by the venom duct.

It localises to the secreted. This chain is Conotoxin Lt11.2, found in Conus litteratus (Lettered cone).